The primary structure comprises 930 residues: uncharacterized protein (930 aa).

A signal peptide spans 1-20 (MPSFVLWTFHLCSQWFQGLT). N-linked (GlcNAc...) asparagine glycosylation is found at asparagine 137, asparagine 146, asparagine 164, asparagine 210, asparagine 257, asparagine 628, asparagine 717, and asparagine 799.

The protein resides in the secreted. This is an uncharacterized protein from Arthroderma benhamiae (strain ATCC MYA-4681 / CBS 112371) (Trichophyton mentagrophytes).